Consider the following 383-residue polypeptide: Glutaminyl-peptide cyclotransferase-like protein (383 aa).

The disordered stretch occupies residues 1-25; it reads MPSGGRGRPRLQVGERSLLERPSPP. A helical transmembrane segment spans residues 35-57; sequence LLPQLLLALTVASVFYTIWRIWH. Cys168 and Cys192 are disulfide-bonded. Position 187 (Asp187) interacts with Zn(2+). The active-site Proton acceptor is Glu226. Glu227 is a binding site for Zn(2+). Asp270 acts as the Proton acceptor in catalysis. A Zn(2+)-binding site is contributed by His352.

This sequence belongs to the glutaminyl-peptide cyclotransferase family.

It localises to the golgi apparatus membrane. It carries out the reaction N-terminal L-glutaminyl-[peptide] = N-terminal 5-oxo-L-prolyl-[peptide] + NH4(+). In terms of biological role, responsible for the biosynthesis of pyroglutamyl peptides. The protein is Glutaminyl-peptide cyclotransferase-like protein (QPCTL) of Bos taurus (Bovine).